The following is a 284-amino-acid chain: 2-dehydro-3-deoxyphosphooctonate aldolase (284 aa).

This sequence belongs to the KdsA family.

It localises to the cytoplasm. The enzyme catalyses D-arabinose 5-phosphate + phosphoenolpyruvate + H2O = 3-deoxy-alpha-D-manno-2-octulosonate-8-phosphate + phosphate. It participates in carbohydrate biosynthesis; 3-deoxy-D-manno-octulosonate biosynthesis; 3-deoxy-D-manno-octulosonate from D-ribulose 5-phosphate: step 2/3. Its pathway is bacterial outer membrane biogenesis; lipopolysaccharide biosynthesis. This Paraburkholderia phymatum (strain DSM 17167 / CIP 108236 / LMG 21445 / STM815) (Burkholderia phymatum) protein is 2-dehydro-3-deoxyphosphooctonate aldolase.